Consider the following 101-residue polypeptide: Small ribosomal subunit protein bS18c (101 aa).

A compositionally biased stretch (basic residues) spans 1 to 19; the sequence is MNKSKRPFTKSKRSFRRRL. Positions 1-20 are disordered; sequence MNKSKRPFTKSKRSFRRRLP.

The protein belongs to the bacterial ribosomal protein bS18 family. Part of the 30S ribosomal subunit.

The protein localises to the plastid. It localises to the chloroplast. In Arabis hirsuta (Hairy rock-cress), this protein is Small ribosomal subunit protein bS18c.